The chain runs to 247 residues: Small ribosomal subunit protein uS2 (247 aa).

It belongs to the universal ribosomal protein uS2 family.

This chain is Small ribosomal subunit protein uS2, found in Ectopseudomonas mendocina (strain ymp) (Pseudomonas mendocina).